The chain runs to 263 residues: Chromosomal replication initiator protein DnaA (263 aa).

Position 1 (glutamate 1) is a region of interest, domain I, interacts with DnaA modulators. A region of interest (domain II) is located at residue glutamate 1. A domain III, AAA+ region region spans residues 1 to 179; the sequence is ESGMGKTHLL…GSVSRLNFWS (179 aa). ATP contacts are provided by glycine 3, glycine 5, lysine 6, and threonine 7. Residues 180 to 263 form a domain IV, binds dsDNA region; it reads QQNPEEKIIT…HTLAQIGEEF (84 aa).

This sequence belongs to the DnaA family. As to quaternary structure, oligomerizes as a right-handed, spiral filament on DNA at oriC.

It localises to the cytoplasm. Functionally, plays an essential role in the initiation and regulation of chromosomal replication. ATP-DnaA binds to the origin of replication (oriC) to initiate formation of the DNA replication initiation complex once per cell cycle. Binds the DnaA box (a 9 base pair repeat at the origin) and separates the double-stranded (ds)DNA. Forms a right-handed helical filament on oriC DNA; dsDNA binds to the exterior of the filament while single-stranded (ss)DNA is stabiized in the filament's interior. The ATP-DnaA-oriC complex binds and stabilizes one strand of the AT-rich DNA unwinding element (DUE), permitting loading of DNA polymerase. After initiation quickly degrades to an ADP-DnaA complex that is not apt for DNA replication. Binds acidic phospholipids. The sequence is that of Chromosomal replication initiator protein DnaA from Mycoplasma mycoides.